Here is a 566-residue protein sequence, read N- to C-terminus: MPKLEIYKNLFLDKIGKNFTNLEISELLEPFKAEFDGFDESSGKIKIEFNDTNRPDLWSYLGLARQIKTYFFGEMPYYDFFSKKGDFKKFYGEILVDGKMSQIRPFIFGFLAKGLIINDKMLETLIQFQEKLCQNYGQKRRRIAMGMYNSNFIKFPISYIASSPNHKFVPLGMDYELSLLEINEKHPKGLEYSHIIKNFDKFPLLLDDNNNVVSYPPIINSNNIGSLKVGDTDLFVEVTGIDFEATLLALSIAACDFYDMGFEILPVKTVFREPFNLDFKELVCPYYFQEEVEFNVENINRLLGSNLTLERICLSLKKMGVNSYSKDFKNYIVPPFYRNDFLHEVDVIEDVMIGEGLSSFNPELPKAFAVGRLSPLEEFSRNVRNLMVGMGFQEMIYNYMGSKKDFIDRMNINDQNFLKVSNPMTENYEYIRASIIPNLLKSESVSSNFPYPHKIFEIGKVALRNLDTTEGTSTFTNLAFLMSGKEISFNEINSIVATLFYYLNIEINLIESKTTFYINGRGADIVIEGFNIGGFGEISPYVLNNFGIFIPCSVFEVNINKLMSRS.

The 76-residue stretch at Tyr287–Pro362 folds into the B5 domain. Mg(2+) is bound by residues Asp340, Asp346, Glu349, and Asp350.

This sequence belongs to the phenylalanyl-tRNA synthetase beta subunit family. Type 2 subfamily. As to quaternary structure, tetramer of two alpha and two beta subunits. Requires Mg(2+) as cofactor.

The protein localises to the cytoplasm. It carries out the reaction tRNA(Phe) + L-phenylalanine + ATP = L-phenylalanyl-tRNA(Phe) + AMP + diphosphate + H(+). The protein is Phenylalanine--tRNA ligase beta subunit of Borreliella burgdorferi (strain ZS7) (Borrelia burgdorferi).